The following is a 783-amino-acid chain: Protein transport protein SEC23 B (783 aa).

Zn(2+)-binding residues include C59, C62, C81, and C84. The segment at 59–84 (CRICTAALNPFARVDFLAKIWICPIC) is zinc finger-like.

This sequence belongs to the SEC23/SEC24 family. SEC23 subfamily. In terms of assembly, component of the coat protein complex II (COPII), composed of at least five proteins: the Sec23/24 complex, the Sec13/31 complex and Sar1. Interacts with SEC24A.

It is found in the cytoplasmic vesicle. The protein resides in the COPII-coated vesicle membrane. The protein localises to the endoplasmic reticulum membrane. Its subcellular location is the membrane. Its function is as follows. Component of the coat protein complex II (COPII) which promotes the formation of transport vesicles from the endoplasmic reticulum (ER). The coat has two main functions, the physical deformation of the endoplasmic reticulum membrane into vesicles and the selection of cargo molecules. This chain is Protein transport protein SEC23 B, found in Arabidopsis thaliana (Mouse-ear cress).